Reading from the N-terminus, the 566-residue chain is Arginine--tRNA ligase (566 aa).

The short motif at 120-130 (PNIAKPFHVGH) is the 'HIGH' region element.

This sequence belongs to the class-I aminoacyl-tRNA synthetase family. As to quaternary structure, monomer.

It localises to the cytoplasm. The enzyme catalyses tRNA(Arg) + L-arginine + ATP = L-arginyl-tRNA(Arg) + AMP + diphosphate. This is Arginine--tRNA ligase from Clostridium kluyveri (strain NBRC 12016).